The primary structure comprises 282 residues: Pantothenate synthetase (282 aa).

Position 30-37 (methionine 30–histidine 37) interacts with ATP. Residue histidine 37 is the Proton donor of the active site. Glutamine 61 contacts (R)-pantoate. A beta-alanine-binding site is contributed by glutamine 61. Glycine 147–aspartate 150 contacts ATP. A (R)-pantoate-binding site is contributed by glutamine 153. Residues valine 176 and lysine 184–arginine 187 contribute to the ATP site.

The protein belongs to the pantothenate synthetase family. As to quaternary structure, homodimer.

The protein resides in the cytoplasm. It carries out the reaction (R)-pantoate + beta-alanine + ATP = (R)-pantothenate + AMP + diphosphate + H(+). The protein operates within cofactor biosynthesis; (R)-pantothenate biosynthesis; (R)-pantothenate from (R)-pantoate and beta-alanine: step 1/1. Functionally, catalyzes the condensation of pantoate with beta-alanine in an ATP-dependent reaction via a pantoyl-adenylate intermediate. The protein is Pantothenate synthetase of Bacillus cereus (strain ATCC 14579 / DSM 31 / CCUG 7414 / JCM 2152 / NBRC 15305 / NCIMB 9373 / NCTC 2599 / NRRL B-3711).